Consider the following 308-residue polypeptide: ATP synthase gamma chain (308 aa).

Belongs to the ATPase gamma chain family. F-type ATPases have 2 components, CF(1) - the catalytic core - and CF(0) - the membrane proton channel. CF(1) has five subunits: alpha(3), beta(3), gamma(1), delta(1), epsilon(1). CF(0) has three main subunits: a, b and c.

It is found in the cell membrane. Its function is as follows. Produces ATP from ADP in the presence of a proton gradient across the membrane. The gamma chain is believed to be important in regulating ATPase activity and the flow of protons through the CF(0) complex. In Lacticaseibacillus paracasei (strain ATCC 334 / BCRC 17002 / CCUG 31169 / CIP 107868 / KCTC 3260 / NRRL B-441) (Lactobacillus paracasei), this protein is ATP synthase gamma chain.